A 408-amino-acid polypeptide reads, in one-letter code: Peptidase T (408 aa).

His78 serves as a coordination point for Zn(2+). Asp80 is an active-site residue. Position 140 (Asp140) interacts with Zn(2+). The active-site Proton acceptor is Glu173. Glu174, Asp196, and His379 together coordinate Zn(2+).

It belongs to the peptidase M20B family. Zn(2+) is required as a cofactor.

Its subcellular location is the cytoplasm. It carries out the reaction Release of the N-terminal residue from a tripeptide.. Its function is as follows. Cleaves the N-terminal amino acid of tripeptides. This is Peptidase T from Escherichia coli O6:K15:H31 (strain 536 / UPEC).